We begin with the raw amino-acid sequence, 152 residues long: Large ribosomal subunit protein bL9 (152 aa).

It belongs to the bacterial ribosomal protein bL9 family.

Binds to the 23S rRNA. The sequence is that of Large ribosomal subunit protein bL9 from Prochlorococcus marinus (strain NATL2A).